The sequence spans 108 residues: Nucleoid-associated protein IL1848 (108 aa).

Disordered stretches follow at residues Met1–Glu26 and Lys88–Phe108. A compositionally biased stretch (low complexity) spans Met9 to Glu26.

This sequence belongs to the YbaB/EbfC family. As to quaternary structure, homodimer.

It localises to the cytoplasm. It is found in the nucleoid. Its function is as follows. Binds to DNA and alters its conformation. May be involved in regulation of gene expression, nucleoid organization and DNA protection. This is Nucleoid-associated protein IL1848 from Idiomarina loihiensis (strain ATCC BAA-735 / DSM 15497 / L2-TR).